The sequence spans 330 residues: 5'-AMP-activated protein kinase subunit gamma-1 (330 aa).

Residues 1 to 24 (MEAVPSSDSYPAVENEHLQETPES) are disordered. CBS domains are found at residues 43–103 (PTSS…KSAL), 125–187 (SFKP…PKPE), and 198–260 (IGTY…NLDV). ADP contacts are provided by residues Arg70, 85 to 90 (MLTITD), Val130, 151 to 152 (HR), and Lys170. Residues Arg70, 85 to 90 (MLTITD), Val130, His151, 151 to 152 (HR), Lys170, Thr200, Ala205, 226 to 227 (SA), and 242 to 245 (SKFD) each bind AMP. Residues Arg70, 85–90 (MLTITD), Val130, 151–152 (HR), Arg152, and Lys170 each bind ATP. Residues 138-159 (LFDAVSSLIRNKIHRLPVIDPE) carry the AMPK pseudosubstrate motif. 242-245 (SKFD) serves as a coordination point for ADP. 242–245 (SKFD) provides a ligand contact to ATP. At Ser261 the chain carries Phosphoserine; by ULK1. Thr263 carries the post-translational modification Phosphothreonine; by ULK1. Residue Arg269 coordinates ADP. AMP is bound at residue Arg269. Residue Arg269 participates in ATP binding. At Ser270 the chain carries Phosphoserine; by ULK1. The 58-residue stretch at 272-329 (YFEGVLKCYLHETLETIINRLVEAEVHRLVVVDENDVVKGIVSLSDILQALVLTGGEK) folds into the CBS 4 domain. ADP contacts are provided by residues Leu277 and 298-299 (HR). AMP-binding positions include Leu277, His298, 298–299 (HR), and 314–317 (SLSD). ATP is bound by residues Leu277 and 298 to 299 (HR).

It belongs to the 5'-AMP-activated protein kinase gamma subunit family. As to quaternary structure, AMPK is a heterotrimer of an alpha catalytic subunit (PRKAA1 or PRKAA2), a beta (PRKAB1 or PRKAB2) and a gamma non-catalytic subunits (PRKAG1, PRKAG2 or PRKAG3). Interacts with FNIP1 and FNIP2. In terms of processing, phosphorylated by ULK1 and ULK2; leading to negatively regulate AMPK activity and suggesting the existence of a regulatory feedback loop between ULK1, ULK2 and AMPK. Post-translationally, glycosylated; O-GlcNAcylated by OGT, promoting the AMP-activated protein kinase (AMPK) activity.

Functionally, AMP/ATP-binding subunit of AMP-activated protein kinase (AMPK), an energy sensor protein kinase that plays a key role in regulating cellular energy metabolism. In response to reduction of intracellular ATP levels, AMPK activates energy-producing pathways and inhibits energy-consuming processes: inhibits protein, carbohydrate and lipid biosynthesis, as well as cell growth and proliferation. AMPK acts via direct phosphorylation of metabolic enzymes, and by longer-term effects via phosphorylation of transcription regulators. Also acts as a regulator of cellular polarity by remodeling the actin cytoskeleton; probably by indirectly activating myosin. Gamma non-catalytic subunit mediates binding to AMP, ADP and ATP, leading to activate or inhibit AMPK: AMP-binding results in allosteric activation of alpha catalytic subunit (PRKAA1 or PRKAA2) both by inducing phosphorylation and preventing dephosphorylation of catalytic subunits. ADP also stimulates phosphorylation, without stimulating already phosphorylated catalytic subunit. ATP promotes dephosphorylation of catalytic subunit, rendering the AMPK enzyme inactive. The sequence is that of 5'-AMP-activated protein kinase subunit gamma-1 (PRKAG1) from Bos taurus (Bovine).